The following is an 859-amino-acid chain: Leucine--tRNA ligase (859 aa).

The 'HIGH' region signature appears at Pro-42–His-52. Residues Lys-618 to Ser-622 carry the 'KMSKS' region motif. Lys-621 is an ATP binding site.

It belongs to the class-I aminoacyl-tRNA synthetase family.

It localises to the cytoplasm. It catalyses the reaction tRNA(Leu) + L-leucine + ATP = L-leucyl-tRNA(Leu) + AMP + diphosphate. The sequence is that of Leucine--tRNA ligase from Shewanella sp. (strain W3-18-1).